The following is a 155-amino-acid chain: MRRRRAEVRKVPPDPIYNDVLVSKLINRVMWDGKKSIAQKIVYKAMEYLSEKTKKDPLEALHQAIDNVRPLVEVRPRRVGGATYQVPIEVEEPRKTSLALRWIVEAARSKKGRPMAEKLGEELVNAFNNTGTAIKKKEDVHRMAEANRAFAHFRW.

Belongs to the universal ribosomal protein uS7 family. Part of the 30S ribosomal subunit. Contacts proteins S9 and S11.

Its function is as follows. One of the primary rRNA binding proteins, it binds directly to 16S rRNA where it nucleates assembly of the head domain of the 30S subunit. Is located at the subunit interface close to the decoding center, probably blocks exit of the E-site tRNA. The polypeptide is Small ribosomal subunit protein uS7 (Thermosipho africanus (strain TCF52B)).